The sequence spans 158 residues: 6,7-dimethyl-8-ribityllumazine synthase (158 aa).

Residues phenylalanine 23, 61 to 63 (SFE), and 85 to 87 (AVI) each bind 5-amino-6-(D-ribitylamino)uracil. 90-91 (ET) is a binding site for (2S)-2-hydroxy-3-oxobutyl phosphate. Histidine 93 acts as the Proton donor in catalysis. Phenylalanine 118 contributes to the 5-amino-6-(D-ribitylamino)uracil binding site. Arginine 132 is a (2S)-2-hydroxy-3-oxobutyl phosphate binding site.

Belongs to the DMRL synthase family.

The enzyme catalyses (2S)-2-hydroxy-3-oxobutyl phosphate + 5-amino-6-(D-ribitylamino)uracil = 6,7-dimethyl-8-(1-D-ribityl)lumazine + phosphate + 2 H2O + H(+). The protein operates within cofactor biosynthesis; riboflavin biosynthesis; riboflavin from 2-hydroxy-3-oxobutyl phosphate and 5-amino-6-(D-ribitylamino)uracil: step 1/2. Its function is as follows. Catalyzes the formation of 6,7-dimethyl-8-ribityllumazine by condensation of 5-amino-6-(D-ribitylamino)uracil with 3,4-dihydroxy-2-butanone 4-phosphate. This is the penultimate step in the biosynthesis of riboflavin. In Prochlorococcus marinus (strain MIT 9215), this protein is 6,7-dimethyl-8-ribityllumazine synthase.